Reading from the N-terminus, the 424-residue chain is Hemagglutinin-esterase (424 aa).

The signal sequence occupies residues 1-16 (MFLLPRFVLVSCIIGS). Residues 7-127 (FVLVSCIIGS…SNDIWMQNKG (121 aa)) form an esterase domain 1 region. The Virion surface portion of the chain corresponds to 17–392 (LGFDNPPTNV…PICVYDPLPL (376 aa)). The active-site Nucleophile is serine 40. The cysteines at positions 44 and 65 are disulfide-linked. Residues asparagine 54, asparagine 89, asparagine 153, asparagine 236, and asparagine 301 are each glycosylated (N-linked (GlcNAc...) asparagine; by host). Disulfide bonds link cysteine 113/cysteine 162, cysteine 197/cysteine 276, and cysteine 205/cysteine 249. The interval 128-266 (LFYTQVYKNM…GNYLAISNEL (139 aa)) is receptor binding. The segment at 267-379 (LLTVPTKAIC…RCPTAADINN (113 aa)) is esterase domain 2. A disulfide bridge links cysteine 307 with cysteine 312. An N-linked (GlcNAc...) asparagine; by host glycan is attached at asparagine 316. Active-site charge relay system residues include aspartate 326 and histidine 329. An intrachain disulfide couples cysteine 347 to cysteine 371. N-linked (GlcNAc...) asparagine; by host glycosylation is present at asparagine 358. Residues 393–413 (ILLGILLGVAVIIIVVLLLYF) form a helical membrane-spanning segment. The Intravirion portion of the chain corresponds to 414 to 424 (MVDNGTRLHDA). N-linked (GlcNAc...) asparagine; by host glycosylation occurs at asparagine 417.

This sequence belongs to the influenza type C/coronaviruses hemagglutinin-esterase family. As to quaternary structure, homodimer; disulfide-linked. Forms a complex with the M protein in the pre-Golgi. Associates then with S-M complex to form a ternary complex S-M-HE. In terms of processing, N-glycosylated in the host RER.

It localises to the virion membrane. The protein localises to the host cell membrane. It carries out the reaction N-acetyl-9-O-acetylneuraminate + H2O = N-acetylneuraminate + acetate + H(+). The catalysed reaction is N-acetyl-4-O-acetylneuraminate + H2O = N-acetylneuraminate + acetate + H(+). Structural protein that makes short spikes at the surface of the virus. Contains receptor binding and receptor-destroying activities. Mediates de-O-acetylation of N-acetyl-4-O-acetylneuraminic acid, which is probably the receptor determinant recognized by the virus on the surface of erythrocytes and susceptible cells. This receptor-destroying activity is important for virus release as it probably helps preventing self-aggregation and ensures the efficient spread of the progeny virus from cell to cell. May serve as a secondary viral attachment protein for initiating infection, the spike protein being the major one. May become a target for both the humoral and the cellular branches of the immune system. This is Hemagglutinin-esterase from Bovine coronavirus (strain LY-138) (BCoV).